The sequence spans 225 residues: Techylectin-like protein (225 aa).

Positions 32–225 (CPSPPLPIDC…WTEIKIKDVK (194 aa)) constitute a Fibrinogen C-terminal domain. Cysteine 41 and cysteine 60 are oxidised to a cystine. Positions 75–77 (RGD) match the Cell attachment site motif. Residues aspartate 164 and threonine 170 each coordinate Ca(2+). Residues cysteine 172 and cysteine 185 are joined by a disulfide bond.

In terms of tissue distribution, expressed by the venom gland.

The protein resides in the secreted. Its function is as follows. Lectin involved in innate immunity. The polypeptide is Techylectin-like protein (Phoneutria nigriventer (Brazilian armed spider)).